Reading from the N-terminus, the 194-residue chain is MFVLSIALLSCTTLCAATTEWWGDLRAHLNPARQAPFYDVTYDEKVNVCPQGLHADAIPEYVYFGTMLATMTVDEHDQCLQKCAEKPRCKAVNFFHPFAYQEKGFCELLTEGQLDNPSLMRPFRKATYYEKIRCRELDDVEDVEEAAPIGSEITEKLPEDMAREKKLDMSKLMKKLSAKVKEFNGGAGGFRAAR.

The first 15 residues, 1–15 (MFVLSIALLSCTTLC), serve as a signal peptide directing secretion. The PAN domain occupies 49-134 (CPQGLHADAI…KATYYEKIRC (86 aa)). Intrachain disulfides connect cysteine 49-cysteine 134 and cysteine 79-cysteine 106.

This is an uncharacterized protein from Caenorhabditis elegans.